The chain runs to 214 residues: UPF0111 protein MJ0629 (214 aa).

It belongs to the UPF0111 family.

The chain is UPF0111 protein MJ0629 from Methanocaldococcus jannaschii (strain ATCC 43067 / DSM 2661 / JAL-1 / JCM 10045 / NBRC 100440) (Methanococcus jannaschii).